The primary structure comprises 165 residues: Large ribosomal subunit protein uL10 (165 aa).

The protein belongs to the universal ribosomal protein uL10 family. As to quaternary structure, part of the ribosomal stalk of the 50S ribosomal subunit. The N-terminus interacts with L11 and the large rRNA to form the base of the stalk. The C-terminus forms an elongated spine to which L12 dimers bind in a sequential fashion forming a multimeric L10(L12)X complex.

Functionally, forms part of the ribosomal stalk, playing a central role in the interaction of the ribosome with GTP-bound translation factors. The protein is Large ribosomal subunit protein uL10 of Shewanella halifaxensis (strain HAW-EB4).